We begin with the raw amino-acid sequence, 621 residues long: 1-deoxy-D-xylulose-5-phosphate synthase (621 aa).

Thiamine diphosphate is bound by residues H80 and 121–123 (GHS). D152 is a binding site for Mg(2+). Thiamine diphosphate-binding positions include 153–154 (GA), N181, Y288, and E370. N181 is a Mg(2+) binding site.

It belongs to the transketolase family. DXPS subfamily. As to quaternary structure, homodimer. Requires Mg(2+) as cofactor. It depends on thiamine diphosphate as a cofactor.

It catalyses the reaction D-glyceraldehyde 3-phosphate + pyruvate + H(+) = 1-deoxy-D-xylulose 5-phosphate + CO2. Its pathway is metabolic intermediate biosynthesis; 1-deoxy-D-xylulose 5-phosphate biosynthesis; 1-deoxy-D-xylulose 5-phosphate from D-glyceraldehyde 3-phosphate and pyruvate: step 1/1. Catalyzes the acyloin condensation reaction between C atoms 2 and 3 of pyruvate and glyceraldehyde 3-phosphate to yield 1-deoxy-D-xylulose-5-phosphate (DXP). This chain is 1-deoxy-D-xylulose-5-phosphate synthase, found in Erwinia tasmaniensis (strain DSM 17950 / CFBP 7177 / CIP 109463 / NCPPB 4357 / Et1/99).